Consider the following 466-residue polypeptide: Asparagine--tRNA ligase (466 aa).

Belongs to the class-II aminoacyl-tRNA synthetase family. As to quaternary structure, homodimer.

The protein resides in the cytoplasm. The catalysed reaction is tRNA(Asn) + L-asparagine + ATP = L-asparaginyl-tRNA(Asn) + AMP + diphosphate + H(+). In Colwellia psychrerythraea (strain 34H / ATCC BAA-681) (Vibrio psychroerythus), this protein is Asparagine--tRNA ligase.